We begin with the raw amino-acid sequence, 443 residues long: Serine/threonine-protein phosphatase 2A 55 kDa regulatory subunit B beta isoform (443 aa).

WD repeat units follow at residues 22-61 (TEAD…KNQV), 87-128 (EIEE…KRPE), 171-209 (AHTY…QSFN), and 220-260 (ELTE…CVTG). S275 bears the Phosphoserine mark. WD repeat units lie at residues 279-317 (KLSS…RPIE), 334-375 (ENDC…DVTL), and 410-442 (DFSK…QDKV). Position 298 is a phosphothreonine (T298).

This sequence belongs to the phosphatase 2A regulatory subunit B family. As to quaternary structure, PP2A consists of a common heterodimeric core enzyme, composed of a 36 kDa catalytic subunit (subunit C) and a 65 kDa constant regulatory subunit (PR65 or subunit A), that associates with a variety of regulatory subunits. Proteins that associate with the core dimer include three families of regulatory subunits B (the R2/B/PR55/B55, R3/B''/PR72/PR130/PR59 and R5/B'/B56 families), the 48 kDa variable regulatory subunit, viral proteins, and cell signaling molecules. Interacts with TOMM22. Interacts with IER5 (via N- and C-terminal regions). In terms of tissue distribution, brain.

The protein localises to the cytoplasm. Its subcellular location is the cytoskeleton. The protein resides in the membrane. Functionally, the B regulatory subunit might modulate substrate selectivity and catalytic activity, and might also direct the localization of the catalytic enzyme to a particular subcellular compartment. The polypeptide is Serine/threonine-protein phosphatase 2A 55 kDa regulatory subunit B beta isoform (PPP2R2B) (Sus scrofa (Pig)).